The chain runs to 725 residues: Ferric reduction oxidase 2 (725 aa).

The Cytoplasmic portion of the chain corresponds to 1–28; the sequence is MEIEKSNNGGSNPSAGEEFKDMIKGVTK. The chain crosses the membrane as a helical span at residues 29-48; sequence FLMMVIFLGTIMLWIMMPTL. Topologically, residues 49-74 are extracellular; it reads TYRTKWLPHLRIKFGTSTYFGATGTT. Residues 75–93 form a helical membrane-spanning segment; it reads LFMYMFPMMVVACLGCVYL. The Cytoplasmic segment spans residues 94-125; it reads HFKNRKSPHHIDRETKGGVWSKLRKPMLVKGP. A helical transmembrane segment spans residues 126–149; it reads LGIVSVTEITFLAMFVALLLWCFI. Residues 150-217 lie on the Extracellular side of the membrane; sequence TYLRNSFATI…MGLTSESSIK (68 aa). The Ferric oxidoreductase domain occupies 183–303; sequence LGLIGNICLA…YLYIVFMLFF (121 aa). The chain crosses the membrane as a helical span at residues 218–241; it reads YHIWLGHMVMALFTVHGLCYIIYW. Residues His219 and His233 each contribute to the heme site. The Cytoplasmic portion of the chain corresponds to 242–291; that stretch reads ASMHEISQMIMWDTKGVSNLAGEIALAAGLVMWATTYPKIRRRFFEVFFY. A helical membrane pass occupies residues 292-316; the sequence is THYLYIVFMLFFVLHVGISFSFIAL. Heme contacts are provided by His293 and His306. Residues 317–338 lie on the Extracellular side of the membrane; sequence PGFYIFLVDRFLRFLQSRENVR. One can recognise an FAD-binding FR-type domain in the interval 332-437; sequence QSRENVRLLA…EGPYGPASAD (106 aa). Residues 339 to 359 traverse the membrane as a helical segment; the sequence is LLAARILPSDTMELTFSKNSK. Residues 360 to 554 lie on the Cytoplasmic side of the membrane; that stretch reads LVYSPTSIMF…SISSILGPNS (195 aa). 381-384 is an FAD binding site; sequence HPFT. An NAD(+)-binding site is contributed by 429–432; sequence GPYG. Residues 555 to 577 traverse the membrane as a helical segment; sequence WLWLGAILASSFLIFMIIIGIIT. Over 578–597 the chain is Extracellular; that stretch reads RYYIYPIDHNTNKIYSLTSK. A helical membrane pass occupies residues 598–619; the sequence is TIIYILVISVSIMATCSAAMLW. The Cytoplasmic segment spans residues 620-725; sequence NKKKYGKVES…LHFESISFSW (106 aa).

The protein belongs to the ferric reductase (FRE) family. FAD serves as cofactor. Expressed in the epidermal cells of the roots. High expression in lateral roots and root hairs. Detected in leaves, stems, siliques and in flowers in anthers and styles.

It localises to the cell membrane. The catalysed reaction is 2 a Fe(II)-siderophore + NAD(+) + H(+) = 2 a Fe(III)-siderophore + NADH. In terms of biological role, flavocytochrome that transfers electrons across the plasma membrane to reduce ferric iron chelates to form soluble ferrous iron in the rhizosphere. May be involved in the delivery of iron to developing pollen grains. Also acts as a copper-chelate reductase. Involved in glycine betaine-mediated chilling tolerance and reactive oxygen species accumulation. This Arabidopsis thaliana (Mouse-ear cress) protein is Ferric reduction oxidase 2 (FRO2).